The chain runs to 381 residues: Ecotin-like protein 3 (381 aa).

The interval 232–381 (EHLEVCPKNN…GSKADPVDGK (150 aa)) is disordered. Over residues 273–292 (NESSPSRPRLSSTAYWPQEN) the composition is skewed to polar residues. The segment covering 336–347 (RKAEDDVYEKTM) has biased composition (basic and acidic residues). A compositionally biased stretch (polar residues) spans 363-372 (SASSTKSGNG).

It belongs to the protease inhibitor I11 (ecotin) family.

The sequence is that of Ecotin-like protein 3 from Leishmania major.